We begin with the raw amino-acid sequence, 347 residues long: MRIEEDLKLGFKDVLIRPKRSTLKSRSDVELERQFTFKHSGQTWSGVPIIAANMDTVGTFEMAQALAGFDILTAVHKHYTVEEWAAFINTASADVLKHVMVSTGTSDADFEKTVQILALNPALNFVCIDVANGYSEHFVQFVAKAREAWPTKTICAGNVVTGEMCEELILSGADIVKVGIGPGSVCTTRVKTGVGYPQLSAVIECADAAHGLGGMIVSDGGCTMPGDVAKAFGGGADFVMLGGMLAGHEESGGSVVEENGEKFMLFYGMSSESAMNRHVGGVAKYRAAEGKTVKLPLRGPVGNTARDILGGLRSACTYVGASRLKELTKRTTFIRVQEQENRIFNSL.

108 to 131 is an NADP(+) binding site; sequence ADFEKTVQILALNPALNFVCIDVA. 2 residues coordinate K(+): Gly181 and Gly183. Cys186 serves as the catalytic Thioimidate intermediate. Residue 216-239 participates in NADP(+) binding; that stretch reads IVSDGGCTMPGDVAKAFGGGADFV.

It belongs to the IMPDH/GMPR family. GuaC type 1 subfamily. As to quaternary structure, homotetramer.

It catalyses the reaction IMP + NH4(+) + NADP(+) = GMP + NADPH + 2 H(+). Its function is as follows. Catalyzes the irreversible NADPH-dependent deamination of GMP to IMP. It functions in the conversion of nucleobase, nucleoside and nucleotide derivatives of G to A nucleotides, and in maintaining the intracellular balance of A and G nucleotides. In Salmonella paratyphi A (strain ATCC 9150 / SARB42), this protein is GMP reductase.